Consider the following 851-residue polypeptide: MGNCVALEISCDQTLNHACGCLFGDRNYILKMEANLEALQNTMQELEERRDDLLRRVVIEEDKGLQRLAQVQGWLSRVKDVCSQVNDLLKAKSIQTERLCLCGYCSKNFISGRNYGINVLKKLKHVEGLLAKGVFEVVAEKIPAPKVEKKHIQTTVGLDAMVGRAWNSLMKDERRTLGLYGMGGVGKTTLLASINNKFLEGMNGFDLVIWVVVSKDLQNEGIQEQILGRLGLHRGWKQVTEKEKASYICNILNVKKFVLLLDDLWSEVDLEKIGVPPLTRENGSKIVFTTRSKDVCRDMEVDGEMKVDCLPPDEAWELFQKKVGPIPLQSHEDIPTLARKVAEKCCGLPLALSVIGKAMASRETVQEWQHVIHVLNSSSHEFPSMEEKILPVLKFSYDDLKDEKVKLCFLYCSLFPEDYEVRKEELIEYWMCEGFIDGNEDEDGANNKGHDIIGSLVRAHLLMDGELTTKVKMHDVIREMALWIASNFGKQKETLCVKPGVQLCHIPKDINWESLRRMSLMCNQIANISSSSNSPNLSTLLLQNNKLVHISCDFFRFMPALVVLDLSRNSSLSSLPEAISKLGSLQYINLSTTGIKWLPVSFKELKKLIHLNLEFTDELESIVGIATSLPNLQVLKLFSSRVCIDGSLMEELLLLEHLKVLTATIKDALILESIQGVDRLVSSIQALCLRNMSAPVIILNTVALGGLQHLEIVGSKISEIKIDWERKGRGELKCTSSPGFKHLSVVEIFNLEGPRDLTWLLFAQNLRRLSVTLSLTIEEIINKEKGMSITNVHPNIVVPFGKLEFLEVRGLDELKRICWNPPALPNLRQFDVRSCLKLPEAATEFPRHANE.

One can recognise an NB-ARC domain in the interval 139-441 (AEKIPAPKVE…CEGFIDGNED (303 aa)). Residue 181-188 (GMGGVGKT) participates in ATP binding. LRR repeat units lie at residues 514-535 (SLRR…SNSP), 536-557 (NLST…FFRF), 560-582 (ALVV…ISKL), 584-605 (SLQY…FKEL), and 607-629 (KLIH…ATSL).

Belongs to the disease resistance NB-LRR family.

In terms of biological role, probable disease resistance protein. The chain is Probable disease resistance protein At1g15890 from Arabidopsis thaliana (Mouse-ear cress).